A 678-amino-acid polypeptide reads, in one-letter code: Glycine--tRNA ligase beta subunit (678 aa).

Belongs to the class-II aminoacyl-tRNA synthetase family. In terms of assembly, tetramer of two alpha and two beta subunits.

It is found in the cytoplasm. The enzyme catalyses tRNA(Gly) + glycine + ATP = glycyl-tRNA(Gly) + AMP + diphosphate. The sequence is that of Glycine--tRNA ligase beta subunit from Sulfurihydrogenibium sp. (strain YO3AOP1).